Here is a 602-residue protein sequence, read N- to C-terminus: Zinc finger MYND domain-containing protein 11 (602 aa).

The 77-residue stretch at 6-82 folds into the SAMD1-like winged helix (WH) domain; the sequence is KRRQADTKAI…CKGSKAGIEQ (77 aa). Residues 100 to 148 form a PHD-type zinc finger; it reads DWYCFECHLPGEVLICDLCFRVYHSKCLSDEFRLRDSSSHWQCPVCRSI. Positions 149-255 constitute a Bromo domain; the sequence is KKKHSNKQEM…KDTCHELDEL (107 aa). Residues C258, C261, C277, and H281 each contribute to the Zn(2+) site. The PWWP domain maps to 280-331; the sequence is NHELVWAKMKGFGFWPAKVMQKEDNQVDVRFFGHHHQRAWIPSENIQDITVN. Residues 291–310 are aromatic cage required for H3.3K36me3-specific binding; the sequence is FGFWPAKVMQKEDNQVDVRF. A Glycyl lysine isopeptide (Lys-Gly) (interchain with G-Cter in SUMO2) cross-link involves residue K366. A disordered region spans residues 366-461; the sequence is KNEDRGEEEA…HRSTQTTSDG (96 aa). Positions 394 to 400 match the Nuclear localization signal motif; the sequence is RAKKGRR. Residues K407 and K408 each participate in a glycyl lysine isopeptide (Lys-Gly) (interchain with G-Cter in SUMO2) cross-link. S421 carries the phosphoserine modification. The span at 435-461 shows a compositional bias: polar residues; the sequence is SVSTQTKKLSASSPRMLHRSTQTTSDG. Zn(2+) contacts are provided by C563, C566, C574, C575, C581, C585, H594, and C598. Residues 563 to 598 form an MYND-type zinc finger; sequence CYNCEEEAMYHCCWNTSYCSIKCQQEHWHAEHKRTC.

Homooligomer; forms homooligomers via its C-terminus. Interacts with histone H3.3 trimethylated at 'Lys-36' (H3.3K36me3). Interacts (via MYND-type zinc finger) with NCOR1. Interacts (via MYND-type zinc finger) with MGA protein (via PXLXP motif). Interacts (via MYND-type zinc finger) with EZH2. Interacts with EMSY and E2F6. Interacts with PIAS1 and UBE2I. Ubiquitinated, leading to proteasomal degradation. Post-translationally, sumoylated following its interaction with PIAS1 and UBE2I.

It localises to the nucleus. Its subcellular location is the chromosome. Functionally, chromatin reader that specifically recognizes and binds histone H3.3 trimethylated at 'Lys-36' (H3.3K36me3) and regulates RNA polymerase II elongation. Does not bind other histone H3 subtypes (H3.1 or H3.2). Colocalizes with highly expressed genes and functions as a transcription corepressor by modulating RNA polymerase II at the elongation stage. Binds non-specifically to dsDNA. Acts as a tumor-suppressor by repressing a transcriptional program essential for tumor cell growth. This is Zinc finger MYND domain-containing protein 11 (Zmynd11) from Mus musculus (Mouse).